Consider the following 76-residue polypeptide: uncharacterized protein (76 aa).

The tract at residues 36–41 (PDIIIT) is required for interaction with PPP3CA. Phosphothreonine is present on residues Thr-44 and Thr-46.

In terms of assembly, interacts (via PxIxIT motif, when phosphorylated on Thr-44) with PPP3CA. Not expressed in pancreatic duct cells (at protein level). Abundantly expressed in the pancreas and weakly expressed in the thyroid. As to expression, not expressed in pancreatic duct cells (at protein level). Abundantly expressed in the lymph node and weakly expressed in the stomach, trachea and bone marrow.

This is an uncharacterized protein from Homo sapiens (Human).